The following is a 151-amino-acid chain: MSQLLEKAKDFVVDKVANIKKPEASVSDVDLKHVSRECVEYGAKVSVSNPYSHSIPICEISYNFRSAGRGIASGTIPDPGSLKASDTTMLDVPVKVPYNILVSLVKDIGADWDIDYELELGLTIDLPIVGNFTIPLSQKGEIKLPTLSDIF.

Belongs to the LEA type 2 family.

The protein is Late embryogenesis abundant protein Lea14-A (LEA14-A) of Gossypium hirsutum (Upland cotton).